Here is a 144-residue protein sequence, read N- to C-terminus: Large ribosomal subunit protein uL13 (144 aa).

The protein belongs to the universal ribosomal protein uL13 family. In terms of assembly, part of the 50S ribosomal subunit.

This protein is one of the early assembly proteins of the 50S ribosomal subunit, although it is not seen to bind rRNA by itself. It is important during the early stages of 50S assembly. The chain is Large ribosomal subunit protein uL13 from Mesomycoplasma hyopneumoniae (strain 232) (Mycoplasma hyopneumoniae).